Consider the following 116-residue polypeptide: Ribosome-binding factor A (116 aa).

This sequence belongs to the RbfA family. Monomer. Binds 30S ribosomal subunits, but not 50S ribosomal subunits or 70S ribosomes.

The protein localises to the cytoplasm. One of several proteins that assist in the late maturation steps of the functional core of the 30S ribosomal subunit. Associates with free 30S ribosomal subunits (but not with 30S subunits that are part of 70S ribosomes or polysomes). Required for efficient processing of 16S rRNA. May interact with the 5'-terminal helix region of 16S rRNA. This chain is Ribosome-binding factor A, found in Ureaplasma urealyticum serovar 10 (strain ATCC 33699 / Western).